The sequence spans 831 residues: DNA helicase MCM8 (831 aa).

A compositionally biased stretch (gly residues) spans 1 to 20; sequence MSQGWRGGSGGWRGGGGGNP. The interval 1-53 is disordered; that stretch reads MSQGWRGGSGGWRGGGGGNPYAGAWRGRPWRGRGQGGTWSRNNGRDPVCFAPP. In terms of domain architecture, MCM spans 395–602; it reads LFQLIVNSLC…DHDHLLSEHV (208 aa). 447–454 contacts ATP; sequence GDPGLGKS.

The protein belongs to the MCM family. In terms of assembly, component of the MCM8-MCM9 complex, which forms a hexamer composed of mcm8 and mcm9.

Its subcellular location is the nucleus. It carries out the reaction ATP + H2O = ADP + phosphate + H(+). Functionally, component of the MCM8-MCM9 complex, a complex involved in homologous recombination repair following DNA interstrand cross-links and plays a key role during gametogenesis. The MCM8-MCM9 complex probably acts as a hexameric helicase required to process aberrant forks into homologous recombination substrates and to orchestrate homologous recombination with resection, fork stabilization and fork restart. In eggs, required for elongation during DNA replication by facilitating the recruitment of rpa2/rpa34 and stimulating the processivity of DNA polymerases at replication foci. Probably not required for DNA replication in other cells. The chain is DNA helicase MCM8 (mcm8) from Xenopus laevis (African clawed frog).